Consider the following 196-residue polypeptide: Histone H1.0 (196 aa).

Disordered stretches follow at residues 1 to 29 (MTEN…PKYS) and 78 to 196 (SGTL…GRKK). Positions 24-97 (DHPKYSDMIL…GASGSFRLAK (74 aa)) constitute an H15 domain. Over residues 104 to 196 (PAKKPKKEIK…ASPKKSGRKK (93 aa)) the composition is skewed to basic residues.

This sequence belongs to the histone H1/H5 family.

The protein localises to the nucleus. The protein resides in the chromosome. Histones H1 are necessary for the condensation of nucleosome chains into higher-order structures. The histones H1.0 are found in cells that are in terminal stages of differentiation or that have low rates of cell division. This is Histone H1.0 (h1-0) from Xenopus tropicalis (Western clawed frog).